The chain runs to 146 residues: Hemoglobin subunit beta (146 aa).

Val-1 carries the post-translational modification N-acetylvaline; partial. A Globin domain is found at 2 to 146 (HLTDAEKAAV…VANALAHKYH (145 aa)). At Thr-12 the chain carries Phosphothreonine. Lys-59 carries the N6-acetyllysine modification. A heme b-binding site is contributed by His-63. The residue at position 82 (Lys-82) is an N6-acetyllysine. His-92 is a binding site for heme b. Cys-93 carries the S-nitrosocysteine modification. Lys-144 carries the post-translational modification N6-acetyllysine.

Belongs to the globin family. Heterotetramer of two alpha chains and two beta chains. In terms of tissue distribution, red blood cells.

In terms of biological role, involved in oxygen transport from the lung to the various peripheral tissues. The polypeptide is Hemoglobin subunit beta (HBB) (Procavia capensis habessinica (Abyssinian hyrax)).